A 299-amino-acid polypeptide reads, in one-letter code: Glycine--tRNA ligase alpha subunit (299 aa).

It belongs to the class-II aminoacyl-tRNA synthetase family. As to quaternary structure, tetramer of two alpha and two beta subunits.

It is found in the cytoplasm. The enzyme catalyses tRNA(Gly) + glycine + ATP = glycyl-tRNA(Gly) + AMP + diphosphate. This is Glycine--tRNA ligase alpha subunit from Lactiplantibacillus plantarum (strain ATCC BAA-793 / NCIMB 8826 / WCFS1) (Lactobacillus plantarum).